Reading from the N-terminus, the 260-residue chain is Adenosylcobinamide-GDP ribazoletransferase (260 aa).

6 helical membrane passes run 7-27 (WYFLWGGDSVGAAILFYTRLP), 45-65 (LMGLLLSLILLALDRGLHWLG), 117-137 (AYGVMAIAVVLLLKTFALASF), 145-165 (WALIMALGWGRWGQLLAIALY), 187-207 (LLLGTMIIVFGGVGMGYALAI), and 210-230 (WLILGATGSSALIAWAVGRWF).

Belongs to the CobS family. Requires Mg(2+) as cofactor.

The protein localises to the cell inner membrane. It catalyses the reaction alpha-ribazole + adenosylcob(III)inamide-GDP = adenosylcob(III)alamin + GMP + H(+). The enzyme catalyses alpha-ribazole 5'-phosphate + adenosylcob(III)inamide-GDP = adenosylcob(III)alamin 5'-phosphate + GMP + H(+). It functions in the pathway cofactor biosynthesis; adenosylcobalamin biosynthesis; adenosylcobalamin from cob(II)yrinate a,c-diamide: step 7/7. Its function is as follows. Joins adenosylcobinamide-GDP and alpha-ribazole to generate adenosylcobalamin (Ado-cobalamin). Also synthesizes adenosylcobalamin 5'-phosphate from adenosylcobinamide-GDP and alpha-ribazole 5'-phosphate. This is Adenosylcobinamide-GDP ribazoletransferase from Synechocystis sp. (strain ATCC 27184 / PCC 6803 / Kazusa).